The following is a 180-amino-acid chain: Protein GrpE (180 aa).

Residues 1–19 (MAEKKRAQEQEKVQEDQKM) are compositionally biased toward basic and acidic residues. Residues 1-25 (MAEKKRAQEQEKVQEDQKMQNEQNE) form a disordered region.

The protein belongs to the GrpE family. Homodimer.

The protein localises to the cytoplasm. Functionally, participates actively in the response to hyperosmotic and heat shock by preventing the aggregation of stress-denatured proteins, in association with DnaK and GrpE. It is the nucleotide exchange factor for DnaK and may function as a thermosensor. Unfolded proteins bind initially to DnaJ; upon interaction with the DnaJ-bound protein, DnaK hydrolyzes its bound ATP, resulting in the formation of a stable complex. GrpE releases ADP from DnaK; ATP binding to DnaK triggers the release of the substrate protein, thus completing the reaction cycle. Several rounds of ATP-dependent interactions between DnaJ, DnaK and GrpE are required for fully efficient folding. This chain is Protein GrpE, found in Nitratiruptor sp. (strain SB155-2).